The sequence spans 179 residues: ATP synthase subunit delta (179 aa).

The protein belongs to the ATPase delta chain family. F-type ATPases have 2 components, F(1) - the catalytic core - and F(0) - the membrane proton channel. F(1) has five subunits: alpha(3), beta(3), gamma(1), delta(1), epsilon(1). F(0) has three main subunits: a(1), b(2) and c(10-14). The alpha and beta chains form an alternating ring which encloses part of the gamma chain. F(1) is attached to F(0) by a central stalk formed by the gamma and epsilon chains, while a peripheral stalk is formed by the delta and b chains.

The protein resides in the cell membrane. Its function is as follows. F(1)F(0) ATP synthase produces ATP from ADP in the presence of a proton or sodium gradient. F-type ATPases consist of two structural domains, F(1) containing the extramembraneous catalytic core and F(0) containing the membrane proton channel, linked together by a central stalk and a peripheral stalk. During catalysis, ATP synthesis in the catalytic domain of F(1) is coupled via a rotary mechanism of the central stalk subunits to proton translocation. Functionally, this protein is part of the stalk that links CF(0) to CF(1). It either transmits conformational changes from CF(0) to CF(1) or is implicated in proton conduction. The sequence is that of ATP synthase subunit delta from Natranaerobius thermophilus (strain ATCC BAA-1301 / DSM 18059 / JW/NM-WN-LF).